Consider the following 155-residue polypeptide: Ribosomal RNA large subunit methyltransferase H (155 aa).

S-adenosyl-L-methionine contacts are provided by residues L72, G104, and L123 to L128.

Belongs to the RNA methyltransferase RlmH family. Homodimer.

The protein localises to the cytoplasm. The enzyme catalyses pseudouridine(1915) in 23S rRNA + S-adenosyl-L-methionine = N(3)-methylpseudouridine(1915) in 23S rRNA + S-adenosyl-L-homocysteine + H(+). In terms of biological role, specifically methylates the pseudouridine at position 1915 (m3Psi1915) in 23S rRNA. This is Ribosomal RNA large subunit methyltransferase H from Mycoplasma mycoides subsp. mycoides SC (strain CCUG 32753 / NCTC 10114 / PG1).